The following is a 423-amino-acid chain: UDP-N-acetylglucosamine 1-carboxyvinyltransferase 2 (423 aa).

Position 23–24 (23–24 (KN)) interacts with phosphoenolpyruvate. Arginine 93 is a binding site for UDP-N-acetyl-alpha-D-glucosamine. Cysteine 117 (proton donor) is an active-site residue. Cysteine 117 bears the 2-(S-cysteinyl)pyruvic acid O-phosphothioketal mark. Residues 122–126 (RPIDQ), aspartate 305, and isoleucine 327 each bind UDP-N-acetyl-alpha-D-glucosamine.

It belongs to the EPSP synthase family. MurA subfamily.

The protein resides in the cytoplasm. It catalyses the reaction phosphoenolpyruvate + UDP-N-acetyl-alpha-D-glucosamine = UDP-N-acetyl-3-O-(1-carboxyvinyl)-alpha-D-glucosamine + phosphate. The protein operates within cell wall biogenesis; peptidoglycan biosynthesis. Functionally, cell wall formation. Adds enolpyruvyl to UDP-N-acetylglucosamine. The chain is UDP-N-acetylglucosamine 1-carboxyvinyltransferase 2 from Listeria monocytogenes serotype 4b (strain F2365).